The chain runs to 253 residues: Low affinity immunoglobulin gamma Fc region receptor III-B (253 aa).

A signal peptide spans M1 to A20. The Extracellular portion of the chain corresponds to A21 to Q207. 2 consecutive Ig-like C2-type domains span residues P24–H105 and E120–T189. 2 disulfides stabilise this stretch: C47–C89 and C128–C172. N56, N63, N165, and N180 each carry an N-linked (GlcNAc...) asparagine glycan. The chain crosses the membrane as a helical span at residues I208–F226. Residues S227–K253 lie on the Cytoplasmic side of the membrane.

Forms a heterooligomeric complex with ITAM-containing signaling subunits FCER1G. Interacts (via transmembrane domain) with signaling subunits; this interaction is a prerequisite for receptor complex expression on the cell surface and intracellular signal transduction. Binds the Fc region of antigen-complexed IgG.

It is found in the cell membrane. Its function is as follows. Receptor for the invariable Fc fragment of immunoglobulin gamma (IgG). Optimally activated upon binding of clustered antigen-IgG complexes displayed on cell surfaces, triggers lysis of antibody-coated cells, a process known as antibody-dependent cellular cytotoxicity (ADCC). Does not bind free monomeric IgG, thus avoiding inappropriate effector cell activation in the absence of antigenic trigger. Mediates IgG effector functions on natural killer (NK) cells. Binds antigen-IgG complexes generated upon infection and triggers NK cell-dependent cytokine production and degranulation to limit viral load and propagation. Fc-binding subunit that associates with FCER1G adapters to form functional signaling complexes. Following the engagement of antigen-IgG complexes, triggers phosphorylation of immunoreceptor tyrosine-based activation motif (ITAM)-containing adapters with subsequent activation of phosphatidylinositol 3-kinase signaling and sustained elevation of intracellular calcium that ultimately drive NK cell activation. Mediates enhanced ADCC in response to afucosylated IgGs. This is Low affinity immunoglobulin gamma Fc region receptor III-B (FCGR3B) from Oryctolagus cuniculus (Rabbit).